The chain runs to 650 residues: Acetyl-coenzyme A synthetase (650 aa).

Residues 191–194 (RGGR), T311, and N335 contribute to the CoA site. Residues 387-389 (GEP), 411-416 (DTWWQT), D500, and R515 contribute to the ATP site. S523 is a CoA binding site. Position 526 (R526) interacts with ATP. Mg(2+) contacts are provided by V537, H539, and V542. R584 contacts CoA. The residue at position 609 (K609) is an N6-acetyllysine.

This sequence belongs to the ATP-dependent AMP-binding enzyme family. Requires Mg(2+) as cofactor. Acetylated. Deacetylation by the SIR2-homolog deacetylase activates the enzyme.

The enzyme catalyses acetate + ATP + CoA = acetyl-CoA + AMP + diphosphate. Functionally, catalyzes the conversion of acetate into acetyl-CoA (AcCoA), an essential intermediate at the junction of anabolic and catabolic pathways. AcsA undergoes a two-step reaction. In the first half reaction, AcsA combines acetate with ATP to form acetyl-adenylate (AcAMP) intermediate. In the second half reaction, it can then transfer the acetyl group from AcAMP to the sulfhydryl group of CoA, forming the product AcCoA. The polypeptide is Acetyl-coenzyme A synthetase (Shewanella sp. (strain MR-4)).